A 288-amino-acid chain; its full sequence is Diaminopimelate epimerase (288 aa).

Positions 14 and 67 each coordinate substrate. The active-site Proton donor is the Cys-76. Substrate contacts are provided by residues 77–78 (GN), Asn-166, Asn-199, and 217–218 (ER). Catalysis depends on Cys-226, which acts as the Proton acceptor. A substrate-binding site is contributed by 227–228 (GT).

The protein belongs to the diaminopimelate epimerase family. In terms of assembly, homodimer.

The protein resides in the cytoplasm. It carries out the reaction (2S,6S)-2,6-diaminopimelate = meso-2,6-diaminopimelate. Its pathway is amino-acid biosynthesis; L-lysine biosynthesis via DAP pathway; DL-2,6-diaminopimelate from LL-2,6-diaminopimelate: step 1/1. Its function is as follows. Catalyzes the stereoinversion of LL-2,6-diaminopimelate (L,L-DAP) to meso-diaminopimelate (meso-DAP), a precursor of L-lysine and an essential component of the bacterial peptidoglycan. This Bacillus thuringiensis (strain Al Hakam) protein is Diaminopimelate epimerase.